The primary structure comprises 445 residues: Histamine H3 receptor (445 aa).

The Extracellular portion of the chain corresponds to 1 to 39; that stretch reads MERAPPDGPLNASGALAGEAAAAGGARGFSAAWTAVLAA. N-linked (GlcNAc...) asparagine glycosylation is present at N11. A helical membrane pass occupies residues 40–60; the sequence is LMALLIVATVLGNALVMLAFV. The Cytoplasmic segment spans residues 61–70; that stretch reads ADSSLRTQNN. Residues 71–91 traverse the membrane as a helical segment; sequence FFLLNLAISDFLVGAFCIPLY. Topologically, residues 92–108 are extracellular; it reads VPYVLTGRWTFGRGLCK. A disulfide bridge connects residues C107 and C188. A helical membrane pass occupies residues 109–129; that stretch reads LWLVVDYLLCTSSAFNIVLIS. At 130 to 156 the chain is on the cytoplasmic side; sequence YDRFLSVTRAVSYRAQQGDTRRAVRKM. Residues 157 to 177 form a helical membrane-spanning segment; that stretch reads LLVWVLAFLLYGPAILSWEYL. The Extracellular portion of the chain corresponds to 178 to 196; it reads SGGSSIPEGHCYAEFFYNW. The chain crosses the membrane as a helical span at residues 197–217; that stretch reads YFLITASTLEFFTPFLSVTFF. Topologically, residues 218–359 are cytoplasmic; it reads NLSIYLNIQR…LSRDRKVAKS (142 aa). Disordered stretches follow at residues 237–260 and 288–336; these read REAA…GCWG and EATL…LEKR. Over residues 242–257 the composition is skewed to pro residues; it reads PEPPPEAQPSPPPPPG. Positions 290–299 are enriched in gly residues; it reads TLGGGGGGGS. Low complexity predominate over residues 300-312; that stretch reads VASPTSSSGSSSR. The helical transmembrane segment at 360-380 threads the bilayer; it reads LAVIVSIFGLCWAPYTLLMII. Over 381–395 the chain is Extracellular; it reads RAACHGHCVPDYWYE. The chain crosses the membrane as a helical span at residues 396-416; the sequence is TSFWLLWANSAVNPVLYPLCH. Topologically, residues 417 to 445 are cytoplasmic; it reads HSFRRAFTKLLCPQKLKIQPHSSLEHCWK. S439 carries the phosphoserine modification.

It belongs to the G-protein coupled receptor 1 family. Expressed predominantly in the CNS, with the greatest expression in the thalamus and caudate nucleus. The various isoforms are mainly coexpressed in brain, but their relative expression level varies in a region-specific manner. Isoform 3 and isoform 7 are highly expressed in the thalamus, caudate nucleus and cerebellum while isoform 5 and isoform 6 show a poor expression. Isoform 5 and isoform 6 show a high expression in the amygdala, substantia nigra, cerebral cortex and hypothalamus. Isoform 7 is not found in hypothalamus or substantia nigra.

Its subcellular location is the cell membrane. In terms of biological role, the H3 subclass of histamine receptors could mediate the histamine signals in CNS and peripheral nervous system. Signals through the inhibition of adenylate cyclase and displays high constitutive activity (spontaneous activity in the absence of agonist). Agonist stimulation of isoform 3 neither modified adenylate cyclase activity nor induced intracellular calcium mobilization. This chain is Histamine H3 receptor (HRH3), found in Homo sapiens (Human).